We begin with the raw amino-acid sequence, 159 residues long: MALIILLVACLSVVSADDCSGKTDAWTSIKGPKTGGYWLKQTTKTGENECTYVKGTDFKENTKTATYTYGYKDASGKLTKTTGTATAKGSDIVVGSDTSTVIYTDGKTCDVVKHGGHTELWVHSSKTSGGYNNCCDKKFTETRGSTPANEVYKKCPGMP.

The signal sequence occupies residues 1–16 (MALIILLVACLSVVSA). Cystine bridges form between Cys-50–Cys-155 and Cys-109–Cys-134.

It belongs to the calycin superfamily. Histamine-binding salivary protein family. In terms of processing, not glycosylated.

It localises to the secreted. The protein is Allergen Arg r 1 of Argas reflexus (European pigeon tick).